Reading from the N-terminus, the 103-residue chain is Small ribosomal subunit protein uS10 (103 aa).

This sequence belongs to the universal ribosomal protein uS10 family. In terms of assembly, part of the 30S ribosomal subunit.

In terms of biological role, involved in the binding of tRNA to the ribosomes. This chain is Small ribosomal subunit protein uS10, found in Chlorobaculum parvum (strain DSM 263 / NCIMB 8327) (Chlorobium vibrioforme subsp. thiosulfatophilum).